The following is a 373-amino-acid chain: CXADR-like membrane protein (373 aa).

Residues 1-18 form the signal peptide; sequence MSLLLLLLLVSYYVGTLG. Ig-like C2-type domains follow at residues 19 to 127 and 135 to 224; these read THTE…VILK and PKCE…VRVT. At 19-235 the chain is on the extracellular side; the sequence is THTEIKRVAE…QYVQSIGMVA (217 aa). 2 cysteine pairs are disulfide-bonded: Cys35-Cys111 and Cys153-Cys208. Asn74 and Asn197 each carry an N-linked (GlcNAc...) asparagine glycan. The helical transmembrane segment at 236 to 256 threads the bilayer; that stretch reads GAVTGIVAGALLIFLLVWLLI. Over 257 to 373 the chain is Cytoplasmic; the sequence is RRKDKERYEE…PSQSRAFQTV (117 aa). Over residues 264 to 281 the composition is skewed to basic and acidic residues; it reads YEEEERPNEIREDAEAPK. The segment at 264 to 373 is disordered; sequence YEEEERPNEI…PSQSRAFQTV (110 aa). Positions 288–314 are enriched in low complexity; sequence SSSSSGSRSSRSGSSSTRSTANSASRS. A compositionally biased stretch (polar residues) spans 355–373; sequence KAETTPSMIPSQSRAFQTV.

Predominantly expressed in epithelial cells within different tissues and in the white adipose tissue. Expressed at high levels in small intestine and placenta, at intermediate levels in the heart, skeletal muscle, colon, spleen, kidney and lung and at low levels in the liver and peripheral blood leukocytes. Highly abundant in the intestine during embryo and fetal development (at protein level).

The protein localises to the cell junction. The protein resides in the tight junction. It is found in the cell membrane. Its function is as follows. May be involved in the cell-cell adhesion. May play a role in adipocyte differentiation and development of obesity. Is required for normal small intestine development. The protein is CXADR-like membrane protein (CLMP) of Homo sapiens (Human).